We begin with the raw amino-acid sequence, 692 residues long: MSRTLFVTTALPYANGSFHIGHIMEYIQADIWVRSMRMAGHTVHFVGADDAHGAPIMLKAEKEGITPQALVARYAAERPRYLDGFHIRFDHWHSTDTPENVALSQEIYRALKSEGLIETRSIEQFYDPVKGMFLADRYIKGECPRCHAKDQYGDSCEVCGAVYAPTELINPYSALTGAAPVLKSSDHFFFKLSDPRCVEFLQQWTTGANRQGVKHLQAEVQAKTREWLGGDDGEAKLGDWDISRDAPYFGIEIPDAPGKYFYVWLDAPVGYLASLKSYCAVKGLDFDALLDPAGPTEQVHFIGKDIIYFHALFWPAMLKFAGRKTPDQLNVHGFITVSGEKMSKSRGTGISPLRYLEIGMDAEWLRYYMAAKLNARVEDMDFNPEDFVARVNSDLVGKYVNIASRAAAFITRHFDGELAYDGDTDALAAEFAQQAESIRAAFEAREYNRAVREIMAHADRINQAFDAAQPWVMAKGIGAADAATRARLQDICSRALAGFKALSVMLAPVLPALASRVARELFGANADFAWGDAQQLPQRVAPFKHLMQRVDPKLLDDLFEPPAAEASAPAALPGGEALADTITIDDFAKIDLRIARIVNCEEVEGSTKLLRLTLDVGEGRHRNVFSGIKSAYQPQDLVGKLTVLVANLAPRKMKFGVSEGMVLAASHADEKAEPGIYVLEPWPGAQPGMRVR.

The 'HIGH' region motif lies at 12–22 (PYANGSFHIGH). Positions 143, 146, 156, and 159 each coordinate Zn(2+). The 'KMSKS' region signature appears at 341–345 (KMSKS). Residue Lys344 coordinates ATP. The tRNA-binding domain occupies 586–692 (DFAKIDLRIA…PGAQPGMRVR (107 aa)).

This sequence belongs to the class-I aminoacyl-tRNA synthetase family. MetG type 1 subfamily. In terms of assembly, homodimer. Zn(2+) is required as a cofactor.

Its subcellular location is the cytoplasm. It carries out the reaction tRNA(Met) + L-methionine + ATP = L-methionyl-tRNA(Met) + AMP + diphosphate. Its function is as follows. Is required not only for elongation of protein synthesis but also for the initiation of all mRNA translation through initiator tRNA(fMet) aminoacylation. This is Methionine--tRNA ligase from Bordetella bronchiseptica (strain ATCC BAA-588 / NCTC 13252 / RB50) (Alcaligenes bronchisepticus).